The primary structure comprises 213 residues: Thymidylate kinase (213 aa).

10 to 17 (GLEGAGKT) contributes to the ATP binding site.

The protein belongs to the thymidylate kinase family.

It catalyses the reaction dTMP + ATP = dTDP + ADP. In terms of biological role, phosphorylation of dTMP to form dTDP in both de novo and salvage pathways of dTTP synthesis. This is Thymidylate kinase from Escherichia coli O6:K15:H31 (strain 536 / UPEC).